A 1270-amino-acid chain; its full sequence is ATP-dependent helicase/nuclease subunit A (1270 aa).

One can recognise a UvrD-like helicase ATP-binding domain in the interval 3 to 476 (TKWTEEQELA…IMLYKNFRSR (474 aa)). 24-31 (AAAGSGKT) provides a ligand contact to ATP. Residues 528 to 823 (IENLKVAGDI…RIMSIHKSKG (296 aa)) enclose the UvrD-like helicase C-terminal domain.

It belongs to the helicase family. AddA subfamily. As to quaternary structure, heterodimer of AddA and AddB/RexB. It depends on Mg(2+) as a cofactor.

The enzyme catalyses Couples ATP hydrolysis with the unwinding of duplex DNA by translocating in the 3'-5' direction.. It catalyses the reaction ATP + H2O = ADP + phosphate + H(+). Its function is as follows. The heterodimer acts as both an ATP-dependent DNA helicase and an ATP-dependent, dual-direction single-stranded exonuclease. Recognizes the chi site generating a DNA molecule suitable for the initiation of homologous recombination. The AddA nuclease domain is required for chi fragment generation; this subunit has the helicase and 3' -&gt; 5' nuclease activities. The chain is ATP-dependent helicase/nuclease subunit A from Clostridium perfringens (strain SM101 / Type A).